Reading from the N-terminus, the 348-residue chain is Thioesterase-like protein TwmA (348 aa).

Its pathway is secondary metabolite biosynthesis. Functionally, thioesterase-like protein; part of the gene cluster that mediates the biosynthesis of wortmanamides A and B, reduced long-chain polyketides amidated with a specific omega-amino acid, 5-aminopentanoic acid (5PA). The PKS modules of TwmB are involved in the synthesis of the polyketide backbone, whereas the non-canonical C domain of TwmB is a bonafide condensation domain that specifically selects 5PA and catalyzes amidation to release polyketide chain. The C domain clearly prefers C16 and C18 fatty acyl substrates, which is consistent with simultaneous formation of both octaketide and nonaketide acyl amides wortmanamides A and B. Because TwmB lacks a designated enoylreductase (ER) domain, the required activity is provided the enoyl reductase TwmE. The roles of the remaining enzymes have still to be clarified. The sequence is that of Thioesterase-like protein TwmA from Talaromyces wortmannii (Penicillium wortmannii).